A 106-amino-acid chain; its full sequence is Small ribosomal subunit protein bS16 (106 aa).

The tract at residues 84 to 106 (KREARNNPEKAVPRKERKAADGK) is disordered.

In Rhodopseudomonas palustris (strain ATCC BAA-98 / CGA009), this protein is Small ribosomal subunit protein bS16.